We begin with the raw amino-acid sequence, 143 residues long: HTH-type transcriptional regulator BudR (143 aa).

An HTH lysR-type domain is found at 1–58; the sequence is MELRYLRYFVAVARERHFTRAAKALGISQPPLSQQIKRLEEEVGTPLFRRLTRGVELT. The H-T-H motif DNA-binding region spans 18–37; the sequence is FTRAAKALGISQPPLSQQIK.

The protein belongs to the LysR transcriptional regulatory family.

Functionally, regulator of the budABC operon for 2,3-butanediol synthesis. This is HTH-type transcriptional regulator BudR (budR) from Klebsiella aerogenes (Enterobacter aerogenes).